The following is a 415-amino-acid chain: Serine hydroxymethyltransferase (415 aa).

Residues L121 and 125-127 (GHL) each bind (6S)-5,6,7,8-tetrahydrofolate. Position 229 is an N6-(pyridoxal phosphate)lysine (K229). 352–354 (TPF) contacts (6S)-5,6,7,8-tetrahydrofolate.

It belongs to the SHMT family. Homodimer. Pyridoxal 5'-phosphate is required as a cofactor.

The protein resides in the cytoplasm. The enzyme catalyses (6R)-5,10-methylene-5,6,7,8-tetrahydrofolate + glycine + H2O = (6S)-5,6,7,8-tetrahydrofolate + L-serine. It functions in the pathway one-carbon metabolism; tetrahydrofolate interconversion. It participates in amino-acid biosynthesis; glycine biosynthesis; glycine from L-serine: step 1/1. In terms of biological role, catalyzes the reversible interconversion of serine and glycine with tetrahydrofolate (THF) serving as the one-carbon carrier. This reaction serves as the major source of one-carbon groups required for the biosynthesis of purines, thymidylate, methionine, and other important biomolecules. Also exhibits THF-independent aldolase activity toward beta-hydroxyamino acids, producing glycine and aldehydes, via a retro-aldol mechanism. In Chromobacterium violaceum (strain ATCC 12472 / DSM 30191 / JCM 1249 / CCUG 213 / NBRC 12614 / NCIMB 9131 / NCTC 9757 / MK), this protein is Serine hydroxymethyltransferase.